We begin with the raw amino-acid sequence, 340 residues long: MTKITVVGAGSWGTALAMVLADNGHDVRIWGNRSELMDEINTKHENSRYLPGITLPSTIVAYSSLEEALVDVNVVLIVVPTKAYREVLQDMKKYVAGPTTWIHASKGIEPGTSKRISEVIEEEIPEDLIKDVVVLSGPSHAEEVGLRQATTVTSAAKRMEAAEEVQDLFMNSYFRVYTNPDIVGVELGGALKNIIALAAGITDGLGLGDNAKAALMTRGLTEIARLGRKMGGNPLTFAGLTGMGDLIVTCTSVHSRNWRAGNMLGKGHSLEEVLESMGMVVEGVRTTKAAHELAEKMEVEMPITAALYDVLFNGNNVKDAVGSLMGRVRKHEVEAIPDLL.

4 residues coordinate NADPH: serine 11, tryptophan 12, arginine 33, and lysine 106. Sn-glycerol 3-phosphate is bound by residues lysine 106, glycine 137, and serine 139. Alanine 141 provides a ligand contact to NADPH. Sn-glycerol 3-phosphate is bound by residues lysine 192, aspartate 245, serine 255, arginine 256, and asparagine 257. Residue lysine 192 is the Proton acceptor of the active site. Arginine 256 contacts NADPH. NADPH is bound by residues valine 280 and glutamate 282.

The protein belongs to the NAD-dependent glycerol-3-phosphate dehydrogenase family.

It is found in the cytoplasm. The enzyme catalyses sn-glycerol 3-phosphate + NAD(+) = dihydroxyacetone phosphate + NADH + H(+). It carries out the reaction sn-glycerol 3-phosphate + NADP(+) = dihydroxyacetone phosphate + NADPH + H(+). It participates in membrane lipid metabolism; glycerophospholipid metabolism. Its function is as follows. Catalyzes the reduction of the glycolytic intermediate dihydroxyacetone phosphate (DHAP) to sn-glycerol 3-phosphate (G3P), the key precursor for phospholipid synthesis. This Bacillus anthracis (strain A0248) protein is Glycerol-3-phosphate dehydrogenase [NAD(P)+].